We begin with the raw amino-acid sequence, 273 residues long: 2-dehydro-3-deoxyphosphooctonate aldolase (273 aa).

This sequence belongs to the KdsA family.

It is found in the cytoplasm. The catalysed reaction is D-arabinose 5-phosphate + phosphoenolpyruvate + H2O = 3-deoxy-alpha-D-manno-2-octulosonate-8-phosphate + phosphate. It functions in the pathway carbohydrate biosynthesis; 3-deoxy-D-manno-octulosonate biosynthesis; 3-deoxy-D-manno-octulosonate from D-ribulose 5-phosphate: step 2/3. It participates in bacterial outer membrane biogenesis; lipopolysaccharide biosynthesis. This is 2-dehydro-3-deoxyphosphooctonate aldolase from Geobacter sp. (strain M21).